A 110-amino-acid polypeptide reads, in one-letter code: UPF0235 protein Mpop_2087 (110 aa).

Belongs to the UPF0235 family.

This chain is UPF0235 protein Mpop_2087, found in Methylorubrum populi (strain ATCC BAA-705 / NCIMB 13946 / BJ001) (Methylobacterium populi).